The following is an 838-amino-acid chain: MPSHSRSRDRYRGRDESEPERDRRHYSRRRYRETDYEDDELDDDDYDRRRRYRRDDVYRRSRGQSRGYESHEYHEDDANEYDLAGEDPAVPLRRSRGDERERSAGAYDDYDSPRRRDRHRDGDRRRRHRAYEAEGSPPRGAPDHRRHRSRDDRRERAYESEREARRHRRRERGREAAAAKHQSSDSTNSGSHLLSADALAKLRSEYDKEDRSRAKADAKAEKKQRRKRPVVADQPRRLDPFPEETPRGQSKGRIVSGAYLEEGRSPEMKVRHRGGGGGGGAGSKWRDEGASDSDMDGAEGGTPFWKKKKTWIAVGVVVVLLAIIIPVAVVVSKKNNEKKSDSTTDDTTPRNSNLDGISRDSIPDYAKGTVLDPWTWYDTMGFNVTFTNETVGGLSIMGLNSTWDDSTRPNDNVPPLNEPFPYGSQPIRGVNLGGWLSIEPFIVPSLFESYSSVDGVVDEWTLCQKLGDSAASRIERHYATFITEQDFADIRDAGLDHVRIQFSYWAVTTYDGDQYVPKISWRYLLRAIEYCRKYGLRVKLDPHGIPGSQNGWNHSGRQGPIGWLNGTDGQLNRKRSLEMHDQLSQFFAQDRYKNIVTIYGLVNEPMMLSLPVEDVLDWSTEATKLIQKNGITAYVTVHDGFLNLSKWKQMLKTRPDRMFLDTHQYTIFNTAQIVMKHTEKIKLVCNDWHSMIQQINTTSAGWGPTICGEWSQADTDCTKYLNNVGRGTRWEGTFSLTDSTAYCPTAKSGPSCSCSSANADPSQYSDQYKKFLKTYAEAQMSAFETAQGWFYWTWHTESAPQWSYKTAWKNGFMPQKAYAPDFKCGDDVPDFGDLPENY.

Over residues 1 to 23 (MPSHSRSRDRYRGRDESEPERDR) the composition is skewed to basic and acidic residues. Positions 1–298 (MPSHSRSRDR…GASDSDMDGA (298 aa)) are disordered. Topologically, residues 1-310 (MPSHSRSRDR…GTPFWKKKKT (310 aa)) are cytoplasmic. Residues 35-45 (DYEDDELDDDD) show a composition bias toward acidic residues. Composition is skewed to basic and acidic residues over residues 111–124 (DSPR…DGDR), 149–164 (SRDD…EREA), 200–221 (AKLR…AKAE), and 234–246 (QPRR…EETP). The helical; Signal-anchor for type II membrane protein transmembrane segment at 311 to 331 (WIAVGVVVVLLAIIIPVAVVV) threads the bilayer. The Extracellular segment spans residues 332-838 (SKKNNEKKSD…PDFGDLPENY (507 aa)). A disordered region spans residues 335-359 (NNEKKSDSTTDDTTPRNSNLDGISR). N-linked (GlcNAc...) asparagine glycosylation is found at Asn-383, Asn-388, Asn-400, Asn-553, and Asn-565. The active-site Proton donor is Glu-604. N-linked (GlcNAc...) asparagine glycans are attached at residues Asn-643 and Asn-696. Glu-709 (nucleophile) is an active-site residue.

Belongs to the glycosyl hydrolase 5 (cellulase A) family.

It is found in the cell membrane. The enzyme catalyses Successive hydrolysis of beta-D-glucose units from the non-reducing ends of (1-&gt;3)-beta-D-glucans, releasing alpha-glucose.. Functionally, glucosidase involved in the degradation of cellulosic biomass. Active on lichenan. The protein is Probable glucan 1,3-beta-glucosidase D (exgD) of Aspergillus terreus (strain NIH 2624 / FGSC A1156).